The primary structure comprises 433 residues: D-amino acid dehydrogenase (433 aa).

3-17 (VLVLGSGVIGTASAY) serves as a coordination point for FAD.

It belongs to the DadA oxidoreductase family. The cofactor is FAD.

The enzyme catalyses a D-alpha-amino acid + A + H2O = a 2-oxocarboxylate + AH2 + NH4(+). Its pathway is amino-acid degradation; D-alanine degradation; NH(3) and pyruvate from D-alanine: step 1/1. Oxidative deamination of D-amino acids. This is D-amino acid dehydrogenase from Pseudomonas putida (strain W619).